The sequence spans 432 residues: Putative cyclin-F1-4 (432 aa).

It belongs to the cyclin family. Cyclin F subfamily.

The chain is Putative cyclin-F1-4 (CycF1-4) from Oryza sativa subsp. japonica (Rice).